A 467-amino-acid polypeptide reads, in one-letter code: A-type ATP synthase subunit B (467 aa).

Residues 95–114 (GKGQPRDHMPLPPPEDFRDV) form a disordered region.

The protein belongs to the ATPase alpha/beta chains family. As to quaternary structure, has multiple subunits with at least A(3), B(3), C, D, E, F, H, I and proteolipid K(x).

The protein localises to the cell membrane. In terms of biological role, component of the A-type ATP synthase that produces ATP from ADP in the presence of a proton gradient across the membrane. The B chain is a regulatory subunit. The chain is A-type ATP synthase subunit B from Pyrobaculum aerophilum (strain ATCC 51768 / DSM 7523 / JCM 9630 / CIP 104966 / NBRC 100827 / IM2).